A 240-amino-acid polypeptide reads, in one-letter code: Keratinocyte-associated protein 3 (240 aa).

4 helical membrane passes run V21–G41, V63–S83, V94–L114, and A163–Y183.

Belongs to the TMEM54 family. In terms of tissue distribution, expressed in skin, pancreas and keratinocytes.

It is found in the membrane. The polypeptide is Keratinocyte-associated protein 3 (KRTCAP3) (Homo sapiens (Human)).